The following is a 532-amino-acid chain: MTKAPVAPVVLVILDGWGYCEEKRGNAIVAAKTPIVDSLWAAYPHTLIRTSGKAVGLPEGQMGNSEVGHLNIGAGRVVPQELVRISDAVEDGSIALNPALVKICQEVRSRNSKLHLVGLCSEGGVHSHITHLFGLLDLAKNQQIPEVCIHAITDGRDTAPTDGVRAITMLQNYIDRTGIGRIVTLSGRYYAMDRDHRWDRVKRAYDVMTQDGVGDNRTAVEILQASYAEGVKDEFVNPIRIAPGAIEPGDGVIFFNFRPDRSRQLTQALVSPTFNGFERQQITPLSFVTFTQYDSDLPVAVAFEPQNLSNILGEVIANHGLNQFRTAETEKYAHVTYFFNGGLEEPFAGEDRELVSSPMVATYDHAPAMSAVAVTDVAIAAIQKGTYSLVVINYANPDMVGHTGQIDATITAIETVDRCLGRLLESVIKAGGTTIITADHGNAEYMLDDGGNPWTAHTTNPVPFILVEGEKVKIPGYGTNVELRSDGKLSDIAPTILEILQLPQPPEMTGRSLLKTADYELQRTRTPVQVGL.

The Mn(2+) site is built by D15 and S65. S65 functions as the Phosphoserine intermediate in the catalytic mechanism. Substrate is bound by residues H126, R156–D157, R188, R194, R258–R261, and K331. Mn(2+) contacts are provided by D398, H402, D439, H440, and H457.

Belongs to the BPG-independent phosphoglycerate mutase family. In terms of assembly, monomer. It depends on Mn(2+) as a cofactor.

It catalyses the reaction (2R)-2-phosphoglycerate = (2R)-3-phosphoglycerate. The protein operates within carbohydrate degradation; glycolysis; pyruvate from D-glyceraldehyde 3-phosphate: step 3/5. Catalyzes the interconversion of 2-phosphoglycerate and 3-phosphoglycerate. The polypeptide is 2,3-bisphosphoglycerate-independent phosphoglycerate mutase (Nostoc punctiforme (strain ATCC 29133 / PCC 73102)).